Here is a 267-residue protein sequence, read N- to C-terminus: Syntaxin-72 (267 aa).

Topologically, residues Met1 to Asn244 are cytoplasmic. Residues Lys53–Leu87 are a coiled coil. Residues Glu173 to Gln235 form the t-SNARE coiled-coil homology domain. The helical; Anchor for type IV membrane protein transmembrane segment at Phe245 to Ala265 threads the bilayer. At Leu266 to Asn267 the chain is on the vesicular side.

It belongs to the syntaxin family. In terms of assembly, part of the t-SNARE complex. Expressed in root, leaf, stem, flower and silique.

The protein resides in the membrane. Vesicle trafficking protein that functions in the secretory pathway. This chain is Syntaxin-72 (SYP72), found in Arabidopsis thaliana (Mouse-ear cress).